The sequence spans 515 residues: Protein NRT1/ PTR FAMILY 4.1 (515 aa).

Transmembrane regions (helical) follow at residues 24 to 44 (GIKAAFIACVVETMENMVFLA), 71 to 91 (FVGTSFLLTIFGGFVADSFLT), 93 to 113 (FAAFVLFGSIELLGLIMLTLQ), 134 to 154 (VLFTGLYAIAIGVGGVKGSLP), 168 to 188 (LISGFFNWYFFSVCLGGFLAV), 204 to 224 (FTISTAVLASAIFVFVAGCPM), 298 to 318 (FLALLPIFGSTIIMNCCVAQM), 339 to 359 (IPVASLNAIPLLCMLSSLALY), 381 to 401 (IGYGLALTSISMAVAAIVEVK), 413 to 433 (ISVFWLELQFVMLSLSDMLTV), 461 to 481 (AMGFFLSSVLVEVVNGITGWL), and 492 to 512 (LFYLVLCVLNTLNLFNYIFWA).

This sequence belongs to the major facilitator superfamily. Proton-dependent oligopeptide transporter (POT/PTR) (TC 2.A.17) family. As to expression, expressed in siliques and flowers.

The protein resides in the membrane. Functionally, involved in (+) and (-)-abscisic acid transport (ABA) and in gibberellin import. The protein is Protein NRT1/ PTR FAMILY 4.1 (NPF4.1) of Arabidopsis thaliana (Mouse-ear cress).